Reading from the N-terminus, the 550-residue chain is Arginine--tRNA ligase (550 aa).

Positions 130–140 (ANPTGPIHLGG) match the 'HIGH' region motif.

This sequence belongs to the class-I aminoacyl-tRNA synthetase family. In terms of assembly, monomer.

Its subcellular location is the cytoplasm. The catalysed reaction is tRNA(Arg) + L-arginine + ATP = L-arginyl-tRNA(Arg) + AMP + diphosphate. This is Arginine--tRNA ligase from Rhodococcus opacus (strain B4).